Consider the following 254-residue polypeptide: Phosphoribosylaminoimidazole-succinocarboxamide synthase (254 aa).

This sequence belongs to the SAICAR synthetase family.

It catalyses the reaction 5-amino-1-(5-phospho-D-ribosyl)imidazole-4-carboxylate + L-aspartate + ATP = (2S)-2-[5-amino-1-(5-phospho-beta-D-ribosyl)imidazole-4-carboxamido]succinate + ADP + phosphate + 2 H(+). Its pathway is purine metabolism; IMP biosynthesis via de novo pathway; 5-amino-1-(5-phospho-D-ribosyl)imidazole-4-carboxamide from 5-amino-1-(5-phospho-D-ribosyl)imidazole-4-carboxylate: step 1/2. This Brucella anthropi (strain ATCC 49188 / DSM 6882 / CCUG 24695 / JCM 21032 / LMG 3331 / NBRC 15819 / NCTC 12168 / Alc 37) (Ochrobactrum anthropi) protein is Phosphoribosylaminoimidazole-succinocarboxamide synthase.